The following is a 172-amino-acid chain: L-amino acid N-acyltransferase MnaT (172 aa).

The 163-residue stretch at 1–163 (MSIRFARKAD…DLTFMQLQLD (163 aa)) folds into the N-acetyltransferase domain. Acetyl-CoA contacts are provided by residues 85 to 87 (VYV), 93 to 98 (GKGLGR), N124, and S133.

The protein belongs to the acetyltransferase family. PAT/BAR subfamily.

The catalysed reaction is L-methionine + acetyl-CoA = N-acetyl-L-methionine + CoA + H(+). It carries out the reaction propanoyl-CoA + L-methionine = N-propanoyl-L-methioninate + CoA + H(+). It catalyses the reaction L-alpha-phenylglycine + acetyl-CoA = N-acetyl-L-alpha-phenylglycine + CoA + H(+). The enzyme catalyses L-methionine sulfoximine + acetyl-CoA = N-acetyl-L-methionine sulfoximine + CoA + H(+). The catalysed reaction is L-methionine sulfone + acetyl-CoA = N-acetyl-L-methionine sulfone + CoA + H(+). Functionally, acyltransferase that appears to be required for E.coli optimal growth rate and yield via the formation of N-acetylated amino acids. Catalyzes the acylation of L-methionine using acetyl-CoA or propanoyl-CoA as acyl donors, and the acetylation of L-phenylglycine. Is also able to N-acylate other free L-amino acids and their derivatives using a CoA thioester as cosubstrate. Using acetyl-CoA as an acyl donor, substrate specificity is methionine sulfone &gt; methionine sulfoximine &gt; methionine sulfoxide &gt; methionine. Asparagine, lysine, glutamine, aspartate and glutamate are very poor substrates. Using methionine as a substrate, acyl donor preference is propanoyl-CoA &gt; acetyl-CoA &gt;&gt; butyryl-CoA. Likely plays a role in the resistance against the toxic effects of L-methionine sulfoximine (MSX), via its ability to catalyze its acetylation; MSX is a rare amino acid which inhibits glutamine synthetase (GlnA). This Escherichia coli (strain K12) protein is L-amino acid N-acyltransferase MnaT.